Here is a 344-residue protein sequence, read N- to C-terminus: Arginine N-succinyltransferase (344 aa).

Leu-125 contacts succinyl-CoA. The active-site Proton donor is the His-229.

This sequence belongs to the arginine N-succinyltransferase family.

It catalyses the reaction succinyl-CoA + L-arginine = N(2)-succinyl-L-arginine + CoA + H(+). It functions in the pathway amino-acid degradation; L-arginine degradation via AST pathway; L-glutamate and succinate from L-arginine: step 1/5. Functionally, catalyzes the transfer of succinyl-CoA to arginine to produce N(2)-succinylarginine. This Escherichia coli O6:H1 (strain CFT073 / ATCC 700928 / UPEC) protein is Arginine N-succinyltransferase.